We begin with the raw amino-acid sequence, 235 residues long: MTNLFTRHTRRSLTALALLSGGVYAADEVNAKILSRSLRVFVTGGQVLWDYRIHFKGIERDHPDYHSKLQSLNQRIAHRLLYLCFENGGIYTKFGQQLATFNHGLPREYTMTLAQLQDQAKPVSFDKVKQTIEAEMGRPWNECYKEFDQTPIASASLAQVHHAVDALGREMAVKVQYPHLELQMKADIRVIKWAFQFTEYCFPDVQLQWLFPEFQKALLAEVHFDAQCTALLIIF.

Positions 1–25 (MTNLFTRHTRRSLTALALLSGGVYA) are cleaved as a signal peptide. The short motif at 36-60 (RSLRVFVTGGQVLWDYRIHFKGIER) is the RxLR-dEER element.

The protein belongs to the RxLR effector family.

It localises to the secreted. The protein localises to the host cytoplasm. It is found in the host nucleus. Functionally, effector that acts as a broad suppressor of cell death to interrupt plant immunity. Inhibits cell death induced by cell death-inducing proteins, including the PAMP elicitor INF1 from P.infestans. This chain is Secreted RxLR effector protein 27, found in Plasmopara viticola (Downy mildew of grapevine).